Here is a 354-residue protein sequence, read N- to C-terminus: Uroporphyrinogen decarboxylase (354 aa).

Residues 27 to 31 (RQAGR), Asp-77, Tyr-154, Ser-209, and His-327 contribute to the substrate site.

The protein belongs to the uroporphyrinogen decarboxylase family. Homodimer.

It localises to the cytoplasm. The catalysed reaction is uroporphyrinogen III + 4 H(+) = coproporphyrinogen III + 4 CO2. The protein operates within porphyrin-containing compound metabolism; protoporphyrin-IX biosynthesis; coproporphyrinogen-III from 5-aminolevulinate: step 4/4. Catalyzes the decarboxylation of four acetate groups of uroporphyrinogen-III to yield coproporphyrinogen-III. The polypeptide is Uroporphyrinogen decarboxylase (Shewanella halifaxensis (strain HAW-EB4)).